A 233-amino-acid chain; its full sequence is MNAIILAAGLGSRFKDITQSTHKSLLDIHGTPNLERTLTFLRQANIDNIVIVTGYLHEQFEYLKKKYDCTLIYNEKYREYNSIYSFSLAQDFFNDCYVIDADVVLNRNIFLTKPSHSKYFTVIRSKTHNEWLPILNSNGQVIRIDIGSLNQPSLSGISFWTTQDCNIILTLLKEYTSEVRLKNPKLYWDTIPMEYIEKLNIYTEQLNSDDIFEMDNLDDYHHILQKLTPNKEK.

Residues L6, A8, G9, Y80, S85, and A101 each coordinate CDP-choline. Mg(2+) is bound at residue D102. Y187 provides a ligand contact to CDP-choline. Residues E213 and D215 each coordinate Mg(2+).

Belongs to the LicC/PntC cytidylyltransferase family. It depends on Mg(2+) as a cofactor.

The enzyme catalyses phosphocholine + CTP + H(+) = CDP-choline + diphosphate. It participates in lipopolysaccharide biosynthesis. Functionally, cytidylyltransferase involved in the biosynthesis of lipopolysaccharides (LPS), a necessary component and antigenic determinant of the outer membrane that has been shown to be an important factor in the host-parasite interaction in a number of Gram-negative species. Catalyzes the activation of phosphocholine (P-Cho) to CDP-choline (CDP-Cho). LicC is critical for the expression of the 6A2-specific epitope. This chain is Choline-phosphate cytidylyltransferase, found in Haemophilus influenzae (strain ATCC 51907 / DSM 11121 / KW20 / Rd).